Reading from the N-terminus, the 143-residue chain is Transcription antitermination protein NusB (143 aa).

This sequence belongs to the NusB family.

Functionally, involved in transcription antitermination. Required for transcription of ribosomal RNA (rRNA) genes. Binds specifically to the boxA antiterminator sequence of the ribosomal RNA (rrn) operons. This is Transcription antitermination protein NusB from Clostridium botulinum (strain Kyoto / Type A2).